The following is a 323-amino-acid chain: Large ribosomal subunit protein uL10 (323 aa).

The interval 298-323 is disordered; sequence AAAAPAAAAEPEEEDDDDDFGMGALF. Residues 307-317 are compositionally biased toward acidic residues; it reads EPEEEDDDDDF.

It belongs to the universal ribosomal protein uL10 family. In terms of assembly, P0 forms a pentameric complex by interaction with dimers of P1 and P2. In terms of processing, phosphorylated.

Its function is as follows. Ribosomal protein P0 is the functional equivalent of E.coli protein L10. The sequence is that of Large ribosomal subunit protein uL10 from Trypanosoma cruzi.